Here is a 449-residue protein sequence, read N- to C-terminus: Bifunctional protein GlmU (449 aa).

A pyrophosphorylase region spans residues 1 to 230 (MASSKLAVIV…EAELLGVNAR (230 aa)). UDP-N-acetyl-alpha-D-glucosamine is bound by residues 11-14 (LAAG), Lys-25, Gln-74, 79-80 (GT), 102-104 (YGD), Gly-142, Glu-156, Asn-171, and Asn-228. Mg(2+) is bound at residue Asp-104. Asn-228 is a binding site for Mg(2+). Residues 231–251 (SELAVAEALVQARLREAAMDN) form a linker region. The segment at 252–449 (GATLIDPATV…QQAAKKAKKD (198 aa)) is N-acetyltransferase. The UDP-N-acetyl-alpha-D-glucosamine site is built by Arg-317 and Lys-335. His-347 serves as the catalytic Proton acceptor. The UDP-N-acetyl-alpha-D-glucosamine site is built by Tyr-350 and Asn-361. Residues Ala-364, 370–371 (NY), Ser-389, Ala-407, and Arg-424 each bind acetyl-CoA.

It in the N-terminal section; belongs to the N-acetylglucosamine-1-phosphate uridyltransferase family. This sequence in the C-terminal section; belongs to the transferase hexapeptide repeat family. As to quaternary structure, homotrimer. Requires Mg(2+) as cofactor.

It localises to the cytoplasm. It catalyses the reaction alpha-D-glucosamine 1-phosphate + acetyl-CoA = N-acetyl-alpha-D-glucosamine 1-phosphate + CoA + H(+). It carries out the reaction N-acetyl-alpha-D-glucosamine 1-phosphate + UTP + H(+) = UDP-N-acetyl-alpha-D-glucosamine + diphosphate. The protein operates within nucleotide-sugar biosynthesis; UDP-N-acetyl-alpha-D-glucosamine biosynthesis; N-acetyl-alpha-D-glucosamine 1-phosphate from alpha-D-glucosamine 6-phosphate (route II): step 2/2. Its pathway is nucleotide-sugar biosynthesis; UDP-N-acetyl-alpha-D-glucosamine biosynthesis; UDP-N-acetyl-alpha-D-glucosamine from N-acetyl-alpha-D-glucosamine 1-phosphate: step 1/1. It functions in the pathway bacterial outer membrane biogenesis; LPS lipid A biosynthesis. In terms of biological role, catalyzes the last two sequential reactions in the de novo biosynthetic pathway for UDP-N-acetylglucosamine (UDP-GlcNAc). The C-terminal domain catalyzes the transfer of acetyl group from acetyl coenzyme A to glucosamine-1-phosphate (GlcN-1-P) to produce N-acetylglucosamine-1-phosphate (GlcNAc-1-P), which is converted into UDP-GlcNAc by the transfer of uridine 5-monophosphate (from uridine 5-triphosphate), a reaction catalyzed by the N-terminal domain. This is Bifunctional protein GlmU from Paramagnetospirillum magneticum (strain ATCC 700264 / AMB-1) (Magnetospirillum magneticum).